A 705-amino-acid chain; its full sequence is MLKATIQKFQYGKNIVTIETGMIARQATSAVMVRMDDTSVFVTVVADKKEKLGQKFFPLTVNYQERTYSIGRFPGGFFRREGRPNENEVLVSRLIDRSVRPLFPKNFFNDIQIIATVMSVNPQVNPDIVSIIGASAALSLSGLPFKCPIGSSRIGYIDNKYILNPTTSELIDSKLDMIVSGSSNAVLMVESSSNILQEKNILEAILFGNEQNKIVIENIDKLKKKFKKENLEYDLKSLNNNDIQFVIEDLFFDRIKDSYKIPEKKKRLEKIENIKNDILNNFINNNNTNEEEILYIIQNIERKIVRNRIISGKPRIDGRTEDMVRNLDIHLGILPRTHGSSLFTRGETQALVTTTLGTERDAQNIDDLVGDKIDRFLFHYNFPPYCVGEVGIISSPKRREIGHGKLAKRGMLAVMPDIDKFPYTIRIVSEITESNGSSSMASVCGASLSLMDAGVPISSSVAGIAMGLIKEKDKFVVLTDILGDEDYLGDMDFKVMGTREGVTALQMDIKIEGITSEILQVSLDKAKNARINILNEMDKVIKKPKNEISIFAPRIYKIKINPEKIKDVIGKGGSVIRMLTEKTKSSIEIEDDGTVKVISTDIKNAQCALKKIKDITHEIKINKIYVAKITRISEFGIFACLINNKEGLIHVSKIPYKKFSDINNNFKIGQIISVKVIEIDRYGRIRLSFTGTDKNKNKKFFNKNN.

Positions 486 and 492 each coordinate Mg(2+). One can recognise a KH domain in the interval P553–I612. The S1 motif domain maps to N622 to T690.

The protein belongs to the polyribonucleotide nucleotidyltransferase family. As to quaternary structure, component of the RNA degradosome, which is a multiprotein complex involved in RNA processing and mRNA degradation. It depends on Mg(2+) as a cofactor.

The protein resides in the cytoplasm. It catalyses the reaction RNA(n+1) + phosphate = RNA(n) + a ribonucleoside 5'-diphosphate. Involved in mRNA degradation. Catalyzes the phosphorolysis of single-stranded polyribonucleotides processively in the 3'- to 5'-direction. The sequence is that of Polyribonucleotide nucleotidyltransferase from Wigglesworthia glossinidia brevipalpis.